A 133-amino-acid chain; its full sequence is Basic phospholipase A2 beta-bungarotoxin A-AL2 chain (133 aa).

An N-terminal signal peptide occupies residues 1-5; sequence FLLGA. Positions 6–13 are excised as a propeptide; that stretch reads ANIPPHPL. Intrachain disulfides connect Cys-40–Cys-132, Cys-42–Cys-58, Cys-57–Cys-113, Cys-64–Cys-106, Cys-74–Cys-99, and Cys-92–Cys-104. Positions 41, 43, and 45 each coordinate Ca(2+). His-61 is a catalytic residue. Asp-62 provides a ligand contact to Ca(2+). Residue Asp-107 is part of the active site.

This sequence belongs to the phospholipase A2 family. Group I subfamily. D49 sub-subfamily. In terms of assembly, heterodimer; disulfide-linked. The A chains have phospholipase A2 activity and the B chains show homology with the basic protease inhibitors. Ca(2+) is required as a cofactor. Expressed by the venom gland.

The protein localises to the secreted. It carries out the reaction a 1,2-diacyl-sn-glycero-3-phosphocholine + H2O = a 1-acyl-sn-glycero-3-phosphocholine + a fatty acid + H(+). Its function is as follows. Snake venom phospholipase A2 (PLA2) that inhibits neuromuscular transmission by blocking acetylcholine release from the nerve termini. PLA2 catalyzes the calcium-dependent hydrolysis of the 2-acyl groups in 3-sn-phosphoglycerides. The chain is Basic phospholipase A2 beta-bungarotoxin A-AL2 chain from Bungarus multicinctus (Many-banded krait).